We begin with the raw amino-acid sequence, 204 residues long: Tumor protein D53 (204 aa).

The interval M1 to D20 is disordered. Residues V22–M73 adopt a coiled-coil conformation. Phosphoserine occurs at positions 29, 86, 122, and 131. R133 is modified (omega-N-methylarginine). A Phosphothreonine modification is found at T146. A phosphoserine mark is found at S149 and S174.

The protein belongs to the TPD52 family. Forms a homodimer or heterodimer with other members of the family.

In Homo sapiens (Human), this protein is Tumor protein D53 (TPD52L1).